Here is a 212-residue protein sequence, read N- to C-terminus: ATP phosphoribosyltransferase (212 aa).

This sequence belongs to the ATP phosphoribosyltransferase family. Short subfamily. As to quaternary structure, heteromultimer composed of HisG and HisZ subunits.

It localises to the cytoplasm. The catalysed reaction is 1-(5-phospho-beta-D-ribosyl)-ATP + diphosphate = 5-phospho-alpha-D-ribose 1-diphosphate + ATP. The protein operates within amino-acid biosynthesis; L-histidine biosynthesis; L-histidine from 5-phospho-alpha-D-ribose 1-diphosphate: step 1/9. In terms of biological role, catalyzes the condensation of ATP and 5-phosphoribose 1-diphosphate to form N'-(5'-phosphoribosyl)-ATP (PR-ATP). Has a crucial role in the pathway because the rate of histidine biosynthesis seems to be controlled primarily by regulation of HisG enzymatic activity. In Clostridium botulinum (strain Okra / Type B1), this protein is ATP phosphoribosyltransferase.